Consider the following 102-residue polypeptide: Small ribosomal subunit protein uS10 (102 aa).

It belongs to the universal ribosomal protein uS10 family. As to quaternary structure, part of the 30S ribosomal subunit.

Involved in the binding of tRNA to the ribosomes. In Mycoplasma mycoides subsp. mycoides SC (strain CCUG 32753 / NCTC 10114 / PG1), this protein is Small ribosomal subunit protein uS10.